The sequence spans 423 residues: tRNA(Ile)-lysidine synthase (423 aa).

43–48 (SSGVDS) contacts ATP.

The protein belongs to the tRNA(Ile)-lysidine synthase family.

The protein resides in the cytoplasm. It carries out the reaction cytidine(34) in tRNA(Ile2) + L-lysine + ATP = lysidine(34) in tRNA(Ile2) + AMP + diphosphate + H(+). Functionally, ligates lysine onto the cytidine present at position 34 of the AUA codon-specific tRNA(Ile) that contains the anticodon CAU, in an ATP-dependent manner. Cytidine is converted to lysidine, thus changing the amino acid specificity of the tRNA from methionine to isoleucine. In Helicobacter hepaticus (strain ATCC 51449 / 3B1), this protein is tRNA(Ile)-lysidine synthase.